Consider the following 453-residue polypeptide: Bifunctional protein GlmU (453 aa).

Positions 1-226 are pyrophosphorylase; the sequence is MVAIAILAAG…YEEILGINDR (226 aa). UDP-N-acetyl-alpha-D-glucosamine contacts are provided by residues 7-10, K21, Q73, and 78-79; these read LAAG and GT. Position 103 (D103) interacts with Mg(2+). UDP-N-acetyl-alpha-D-glucosamine is bound by residues G140, E155, N170, and N224. N224 provides a ligand contact to Mg(2+). The segment at 227–247 is linker; the sequence is KQLALAYQILQNRIKDQAMAA. The tract at residues 248–453 is N-acetyltransferase; sequence GVTLIDPDSI…GWRLKQPDPT (206 aa). UDP-N-acetyl-alpha-D-glucosamine-binding residues include R329 and K347. H359 acts as the Proton acceptor in catalysis. Y362 and N373 together coordinate UDP-N-acetyl-alpha-D-glucosamine. Acetyl-CoA is bound by residues A376, 382-383, S401, A419, and R436; that span reads NY.

It in the N-terminal section; belongs to the N-acetylglucosamine-1-phosphate uridyltransferase family. This sequence in the C-terminal section; belongs to the transferase hexapeptide repeat family. Homotrimer. The cofactor is Mg(2+).

It is found in the cytoplasm. The enzyme catalyses alpha-D-glucosamine 1-phosphate + acetyl-CoA = N-acetyl-alpha-D-glucosamine 1-phosphate + CoA + H(+). It catalyses the reaction N-acetyl-alpha-D-glucosamine 1-phosphate + UTP + H(+) = UDP-N-acetyl-alpha-D-glucosamine + diphosphate. Its pathway is nucleotide-sugar biosynthesis; UDP-N-acetyl-alpha-D-glucosamine biosynthesis; N-acetyl-alpha-D-glucosamine 1-phosphate from alpha-D-glucosamine 6-phosphate (route II): step 2/2. It functions in the pathway nucleotide-sugar biosynthesis; UDP-N-acetyl-alpha-D-glucosamine biosynthesis; UDP-N-acetyl-alpha-D-glucosamine from N-acetyl-alpha-D-glucosamine 1-phosphate: step 1/1. It participates in bacterial outer membrane biogenesis; LPS lipid A biosynthesis. Catalyzes the last two sequential reactions in the de novo biosynthetic pathway for UDP-N-acetylglucosamine (UDP-GlcNAc). The C-terminal domain catalyzes the transfer of acetyl group from acetyl coenzyme A to glucosamine-1-phosphate (GlcN-1-P) to produce N-acetylglucosamine-1-phosphate (GlcNAc-1-P), which is converted into UDP-GlcNAc by the transfer of uridine 5-monophosphate (from uridine 5-triphosphate), a reaction catalyzed by the N-terminal domain. The polypeptide is Bifunctional protein GlmU (Cyanothece sp. (strain PCC 7425 / ATCC 29141)).